The following is a 338-amino-acid chain: Nicotinate-nucleotide--dimethylbenzimidazole phosphoribosyltransferase (338 aa).

Glutamate 305 serves as the catalytic Proton acceptor.

The protein belongs to the CobT family.

The catalysed reaction is 5,6-dimethylbenzimidazole + nicotinate beta-D-ribonucleotide = alpha-ribazole 5'-phosphate + nicotinate + H(+). It functions in the pathway nucleoside biosynthesis; alpha-ribazole biosynthesis; alpha-ribazole from 5,6-dimethylbenzimidazole: step 1/2. Its function is as follows. Catalyzes the synthesis of alpha-ribazole-5'-phosphate from nicotinate mononucleotide (NAMN) and 5,6-dimethylbenzimidazole (DMB). This chain is Nicotinate-nucleotide--dimethylbenzimidazole phosphoribosyltransferase, found in Rhizobium etli (strain CIAT 652).